We begin with the raw amino-acid sequence, 337 residues long: Neurogenic differentiation factor 6 (337 aa).

Residues leucine 43–lysine 82 are disordered. Acidic residues predominate over residues glutamate 54 to asparagine 71. Residues arginine 80 to lysine 86 carry the Nuclear localization signal motif. The bHLH domain maps to phenylalanine 94–leucine 146.

Efficient DNA binding requires dimerization with another bHLH protein.

The protein localises to the nucleus. Functionally, activates E box-dependent transcription in collaboration with TCF3/E47. May be a trans-acting factor involved in the development and maintenance of the mammalian nervous system. Transactivates the promoter of its own gene. The chain is Neurogenic differentiation factor 6 (NEUROD6) from Bos taurus (Bovine).